The following is a 337-amino-acid chain: Biotin synthase (337 aa).

Residues 58-288 (AGSELLHACS…AHPHKIIKFA (231 aa)) form the Radical SAM core domain. Residues cysteine 76, cysteine 80, and cysteine 83 each coordinate [4Fe-4S] cluster. The [2Fe-2S] cluster site is built by cysteine 155, cysteine 216, and lysine 286.

It belongs to the radical SAM superfamily. Biotin synthase family. Homodimer. The cofactor is [4Fe-4S] cluster. It depends on [2Fe-2S] cluster as a cofactor.

The catalysed reaction is (4R,5S)-dethiobiotin + (sulfur carrier)-SH + 2 reduced [2Fe-2S]-[ferredoxin] + 2 S-adenosyl-L-methionine = (sulfur carrier)-H + biotin + 2 5'-deoxyadenosine + 2 L-methionine + 2 oxidized [2Fe-2S]-[ferredoxin]. The protein operates within cofactor biosynthesis; biotin biosynthesis; biotin from 7,8-diaminononanoate: step 2/2. Its function is as follows. Catalyzes the conversion of dethiobiotin (DTB) to biotin by the insertion of a sulfur atom into dethiobiotin via a radical-based mechanism. This chain is Biotin synthase, found in Pelodictyon phaeoclathratiforme (strain DSM 5477 / BU-1).